A 418-amino-acid chain; its full sequence is Gamma-glutamyl phosphate reductase (418 aa).

The protein belongs to the gamma-glutamyl phosphate reductase family.

The protein localises to the cytoplasm. The enzyme catalyses L-glutamate 5-semialdehyde + phosphate + NADP(+) = L-glutamyl 5-phosphate + NADPH + H(+). The protein operates within amino-acid biosynthesis; L-proline biosynthesis; L-glutamate 5-semialdehyde from L-glutamate: step 2/2. Its function is as follows. Catalyzes the NADPH-dependent reduction of L-glutamate 5-phosphate into L-glutamate 5-semialdehyde and phosphate. The product spontaneously undergoes cyclization to form 1-pyrroline-5-carboxylate. The sequence is that of Gamma-glutamyl phosphate reductase from Geobacter metallireducens (strain ATCC 53774 / DSM 7210 / GS-15).